The following is a 494-amino-acid chain: Endoglucanase 22 (494 aa).

The first 21 residues, 1–21 (MKPLVCSFIVILLILLPTTIS), serve as a signal peptide directing secretion. Asp-76 acts as the Nucleophile in catalysis. The active site involves His-413. Asn-468 carries an N-linked (GlcNAc...) asparagine glycan. Glu-473 is an active-site residue.

This sequence belongs to the glycosyl hydrolase 9 (cellulase E) family.

Its subcellular location is the secreted. It carries out the reaction Endohydrolysis of (1-&gt;4)-beta-D-glucosidic linkages in cellulose, lichenin and cereal beta-D-glucans.. The sequence is that of Endoglucanase 22 (GH9B16) from Arabidopsis thaliana (Mouse-ear cress).